The sequence spans 83 residues: MAMKSVSNFAIFLILFLVTSEISEIEAKDKECLKGYIDAPLSYCMARIYPSLCYRNCRFYKGAKGGKCDGLKCFCDFCSDKPF.

The signal sequence occupies residues 1 to 27; that stretch reads MAMKSVSNFAIFLILFLVTSEISEIEA. 4 disulfides stabilise this stretch: Cys32–Cys78, Cys44–Cys68, Cys53–Cys73, and Cys57–Cys75.

This sequence belongs to the DEFL family. Protease inhibitor I18 (RTI/MTI-2) subfamily.

The protein localises to the secreted. The sequence is that of Defensin-like protein 194 (ATTI3) from Arabidopsis thaliana (Mouse-ear cress).